Reading from the N-terminus, the 211-residue chain is Imidazole glycerol phosphate synthase subunit HisH (211 aa).

Positions 5-211 (SVALLDYGSG…QLLRNWVDSL (207 aa)) constitute a Glutamine amidotransferase type-1 domain. Cys83 (nucleophile) is an active-site residue. Residues His192 and Glu194 contribute to the active site.

In terms of assembly, heterodimer of HisH and HisF.

The protein resides in the cytoplasm. The catalysed reaction is 5-[(5-phospho-1-deoxy-D-ribulos-1-ylimino)methylamino]-1-(5-phospho-beta-D-ribosyl)imidazole-4-carboxamide + L-glutamine = D-erythro-1-(imidazol-4-yl)glycerol 3-phosphate + 5-amino-1-(5-phospho-beta-D-ribosyl)imidazole-4-carboxamide + L-glutamate + H(+). It catalyses the reaction L-glutamine + H2O = L-glutamate + NH4(+). It functions in the pathway amino-acid biosynthesis; L-histidine biosynthesis; L-histidine from 5-phospho-alpha-D-ribose 1-diphosphate: step 5/9. IGPS catalyzes the conversion of PRFAR and glutamine to IGP, AICAR and glutamate. The HisH subunit catalyzes the hydrolysis of glutamine to glutamate and ammonia as part of the synthesis of IGP and AICAR. The resulting ammonia molecule is channeled to the active site of HisF. This chain is Imidazole glycerol phosphate synthase subunit HisH, found in Nocardia farcinica (strain IFM 10152).